The following is a 259-amino-acid chain: Sesquipedalian-2 (259 aa).

The PH domain maps to 17-121; it reads PADHMGFLRT…WVKVLSRASF (105 aa). Positions 124–149 form a coiled coil; the sequence is MRLVVRELESQLQDARQSLALQRRSS. The short motif at 223–235 is the F&amp;H element; it reads CFSTLHDWYGQEI.

Belongs to the sesquipedalian family. As to quaternary structure, forms homodimers and heterodimers with PHETA1. Interacts with OCRL and INPP5B.

It localises to the early endosome. Its subcellular location is the recycling endosome. The protein resides in the golgi apparatus. It is found in the trans-Golgi network. The protein localises to the cytoplasmic vesicle. It localises to the clathrin-coated vesicle. Functionally, plays a role in endocytic trafficking. Required for receptor recycling from endosomes, both to the trans-Golgi network and the plasma membrane. This chain is Sesquipedalian-2, found in Homo sapiens (Human).